Consider the following 79-residue polypeptide: Acyl carrier protein (79 aa).

Residues 2–77 (SSIEERVKKI…QAVDYINKHL (76 aa)) enclose the Carrier domain. At S37 the chain carries O-(pantetheine 4'-phosphoryl)serine.

It belongs to the acyl carrier protein (ACP) family. In terms of processing, 4'-phosphopantetheine is transferred from CoA to a specific serine of apo-ACP by AcpS. This modification is essential for activity because fatty acids are bound in thioester linkage to the sulfhydryl of the prosthetic group.

It localises to the cytoplasm. It participates in lipid metabolism; fatty acid biosynthesis. Carrier of the growing fatty acid chain in fatty acid biosynthesis. This is Acyl carrier protein from Alkalilimnicola ehrlichii (strain ATCC BAA-1101 / DSM 17681 / MLHE-1).